A 942-amino-acid polypeptide reads, in one-letter code: Probable serine/threonine-protein kinase DDB_G0279719 (942 aa).

The Protein kinase domain maps to Tyr-4–Phe-617. Residues Ile-10 to Ala-18 and Lys-33 each bind ATP. 4 disordered regions span residues Asn-109–Asn-170, Ser-247–Thr-303, Gln-352–Val-371, and Asn-408–Asn-445. Over residues Asn-258 to Ser-272 the composition is skewed to low complexity. Polar residues predominate over residues Ser-288–Thr-303. Low complexity-rich tracts occupy residues Pro-353–Thr-367 and Pro-410–Pro-432. Asp-487 acts as the Proton acceptor in catalysis. Residues Thr-642–Tyr-686 are disordered. Positions Asn-675 to Asn-703 form a coiled coil.

Belongs to the protein kinase superfamily. Ser/Thr protein kinase family.

It carries out the reaction L-seryl-[protein] + ATP = O-phospho-L-seryl-[protein] + ADP + H(+). It catalyses the reaction L-threonyl-[protein] + ATP = O-phospho-L-threonyl-[protein] + ADP + H(+). The chain is Probable serine/threonine-protein kinase DDB_G0279719 from Dictyostelium discoideum (Social amoeba).